Reading from the N-terminus, the 270-residue chain is Glutamate racemase (270 aa).

Substrate is bound by residues 7-8 (DS) and 39-40 (YG). Cys-70 (proton donor/acceptor) is an active-site residue. Position 71-72 (71-72 (NT)) interacts with substrate. Cys-194 (proton donor/acceptor) is an active-site residue. A substrate-binding site is contributed by 195–196 (TH).

Belongs to the aspartate/glutamate racemases family.

The enzyme catalyses L-glutamate = D-glutamate. Its pathway is cell wall biogenesis; peptidoglycan biosynthesis. Its function is as follows. Provides the (R)-glutamate required for cell wall biosynthesis. The protein is Glutamate racemase of Cereibacter sphaeroides (strain ATCC 17023 / DSM 158 / JCM 6121 / CCUG 31486 / LMG 2827 / NBRC 12203 / NCIMB 8253 / ATH 2.4.1.) (Rhodobacter sphaeroides).